Reading from the N-terminus, the 386-residue chain is Succinate--CoA ligase [ADP-forming] subunit beta (386 aa).

An ATP-grasp domain is found at lysine 9–glutamine 244. Residues lysine 46, glycine 53–glycine 55, glutamate 100, and arginine 103 contribute to the ATP site. Mg(2+)-binding residues include asparagine 199 and aspartate 213. Residues asparagine 264 and glycine 321–valine 323 each bind substrate.

It belongs to the succinate/malate CoA ligase beta subunit family. In terms of assembly, heterotetramer of two alpha and two beta subunits. Mg(2+) serves as cofactor.

The catalysed reaction is succinate + ATP + CoA = succinyl-CoA + ADP + phosphate. It carries out the reaction GTP + succinate + CoA = succinyl-CoA + GDP + phosphate. It participates in carbohydrate metabolism; tricarboxylic acid cycle; succinate from succinyl-CoA (ligase route): step 1/1. Succinyl-CoA synthetase functions in the citric acid cycle (TCA), coupling the hydrolysis of succinyl-CoA to the synthesis of either ATP or GTP and thus represents the only step of substrate-level phosphorylation in the TCA. The beta subunit provides nucleotide specificity of the enzyme and binds the substrate succinate, while the binding sites for coenzyme A and phosphate are found in the alpha subunit. This chain is Succinate--CoA ligase [ADP-forming] subunit beta, found in Dichelobacter nodosus (strain VCS1703A).